We begin with the raw amino-acid sequence, 421 residues long: MVADVLLTHFNQLFCLNDPGHPLTGQEMKKATIVEDGYIAIKDGLIVALGSGEPDAELVGPQTIMRSYKGKIATPGIIDCHTHLVYGGSREHEFAKKLAGVSYLDILAQGGGILSTVRATRSASFDNLYQKSKRLLDYMLLHGVTTVEAKSGYGLDWETEKRQLDVVAALEKDHPIDLVSTFMAAHAIPEEYKGNPKAYLDVIIKDMLPVVKEENLAEFCDIFCEKNVFTADESRYLLSKAKEMGFKLRIHADEIASIGGVDVAAELSAVSAEHLMMITNDGIAKLIGAGVIGNLLPATTFSLMEDTYAPARKMIDAGMAITLSTDSNPGSCPTANMQFVMQLGCFMLRLTPIEVLNAVTINAAYSVNRQERVGSLTVGKEADIAIFDAPNIDYLFYFFATNLIHQVYKKGQLTVDRGRIL.

Residues His-81 and His-83 each contribute to the Fe(3+) site. His-81 and His-83 together coordinate Zn(2+). 3 residues coordinate 4-imidazolone-5-propanoate: Arg-90, Tyr-153, and His-186. Tyr-153 provides a ligand contact to N-formimidoyl-L-glutamate. His-251 serves as a coordination point for Fe(3+). Residue His-251 participates in Zn(2+) binding. Glu-254 lines the 4-imidazolone-5-propanoate pocket. Asp-326 provides a ligand contact to Fe(3+). Asp-326 contributes to the Zn(2+) binding site. N-formimidoyl-L-glutamate-binding residues include Asn-328 and Gly-330. Position 331 (Ser-331) interacts with 4-imidazolone-5-propanoate.

This sequence belongs to the metallo-dependent hydrolases superfamily. HutI family. It depends on Zn(2+) as a cofactor. The cofactor is Fe(3+).

Its subcellular location is the cytoplasm. The catalysed reaction is 4-imidazolone-5-propanoate + H2O = N-formimidoyl-L-glutamate. The protein operates within amino-acid degradation; L-histidine degradation into L-glutamate; N-formimidoyl-L-glutamate from L-histidine: step 3/3. In terms of biological role, catalyzes the hydrolytic cleavage of the carbon-nitrogen bond in imidazolone-5-propanoate to yield N-formimidoyl-L-glutamate. It is the third step in the universal histidine degradation pathway. The sequence is that of Imidazolonepropionase from Streptococcus pyogenes serotype M3 (strain SSI-1).